Reading from the N-terminus, the 348-residue chain is Fe(3+) ions import ATP-binding protein FbpC (348 aa).

Positions 7-237 (VELRNVTKRF…PASRFMASFM (231 aa)) constitute an ABC transporter domain. Residue 39–46 (GPSGCGKT) participates in ATP binding.

The protein belongs to the ABC transporter superfamily. Fe(3+) ion importer (TC 3.A.1.10) family. In terms of assembly, the complex is composed of two ATP-binding proteins (FbpC), two transmembrane proteins (FbpB) and a solute-binding protein (FbpA).

It is found in the cell inner membrane. It carries out the reaction Fe(3+)(out) + ATP + H2O = Fe(3+)(in) + ADP + phosphate + H(+). In terms of biological role, part of the ABC transporter complex FbpABC involved in Fe(3+) ions import. Responsible for energy coupling to the transport system. The chain is Fe(3+) ions import ATP-binding protein FbpC from Escherichia coli (strain K12).